We begin with the raw amino-acid sequence, 186 residues long: dCTP deaminase (186 aa).

Position 107–112 (107–112 (KSTYAR)) interacts with dCTP. The active-site Proton donor/acceptor is the Glu133. DCTP-binding residues include Gln152, Tyr166, and Gln176.

This sequence belongs to the dCTP deaminase family. As to quaternary structure, homotrimer.

It carries out the reaction dCTP + H2O + H(+) = dUTP + NH4(+). It functions in the pathway pyrimidine metabolism; dUMP biosynthesis; dUMP from dCTP (dUTP route): step 1/2. Its function is as follows. Catalyzes the deamination of dCTP to dUTP. The protein is dCTP deaminase of Campylobacter fetus subsp. fetus (strain 82-40).